Reading from the N-terminus, the 128-residue chain is Phosphoribosyl-AMP cyclohydrolase (128 aa).

Asp86 provides a ligand contact to Mg(2+). Cys87 contacts Zn(2+). Mg(2+) contacts are provided by Asp88 and Asp90. Zn(2+) contacts are provided by Cys103 and Cys110.

Belongs to the PRA-CH family. Homodimer. Mg(2+) serves as cofactor. It depends on Zn(2+) as a cofactor.

The protein resides in the cytoplasm. The catalysed reaction is 1-(5-phospho-beta-D-ribosyl)-5'-AMP + H2O = 1-(5-phospho-beta-D-ribosyl)-5-[(5-phospho-beta-D-ribosylamino)methylideneamino]imidazole-4-carboxamide. The protein operates within amino-acid biosynthesis; L-histidine biosynthesis; L-histidine from 5-phospho-alpha-D-ribose 1-diphosphate: step 3/9. Catalyzes the hydrolysis of the adenine ring of phosphoribosyl-AMP. This chain is Phosphoribosyl-AMP cyclohydrolase, found in Roseobacter denitrificans (strain ATCC 33942 / OCh 114) (Erythrobacter sp. (strain OCh 114)).